The sequence spans 236 residues: MKTIVICSGGLDSVSLAHRIAAEHELLGLLSFDYGQRHRKELDFAAACAKRLGVPHQIIDIREIGRHLTGSALTDDVDVPDGHYAEETMKTTVVPNRNAIMLAIAFGVAATRKADAVAAAVHGGDHFIYPDCRPGFIDAFQVMQNHALEGYADVILYTPYVNVSKADIVADGAKHHTPFAETWSCYKGGTRHCGRCGTCVERREAFHLAGVTDPTEYEDPEFWVAATAAYVAEEVK.

Cys7–Ala17 lines the ATP pocket. Residues Cys185, Cys193, Cys196, and Cys199 each contribute to the Zn(2+) site.

This sequence belongs to the QueC family. Zn(2+) is required as a cofactor.

The catalysed reaction is 7-carboxy-7-deazaguanine + NH4(+) + ATP = 7-cyano-7-deazaguanine + ADP + phosphate + H2O + H(+). The protein operates within purine metabolism; 7-cyano-7-deazaguanine biosynthesis. In terms of biological role, catalyzes the ATP-dependent conversion of 7-carboxy-7-deazaguanine (CDG) to 7-cyano-7-deazaguanine (preQ(0)). This chain is 7-cyano-7-deazaguanine synthase, found in Sinorhizobium fredii (strain NBRC 101917 / NGR234).